Reading from the N-terminus, the 1098-residue chain is Early transcription factor large subunit homolog (1098 aa).

In terms of domain architecture, Helicase ATP-binding spans 17 to 317 (KGGRAFFPCD…PNGQPLQRQQ (301 aa)). 64 to 71 (WQTGTGKS) contacts ATP. The short motif at 246 to 249 (DEIH) is the DEAH box element. The Helicase C-terminal domain occupies 489-689 (MMKDILSIIR…EGDKALRKHA (201 aa)).

Belongs to the DEAD box helicase family. DEAH subfamily.

The protein localises to the virion. The enzyme catalyses ATP + H2O = ADP + phosphate + H(+). In terms of biological role, putative initation factor. The chain is Early transcription factor large subunit homolog from African swine fever virus (isolate Tick/Malawi/Lil 20-1/1983) (ASFV).